A 1407-amino-acid chain; its full sequence is Adenylate cyclase, aggregation specific (1407 aa).

At 1 to 219 the chain is on the cytoplasmic side; it reads MASSSPMFND…KGYLHQHYNS (219 aa). Residues 28–131 form a disordered region; that stretch reads NELHDGNGGG…SNSVANGGHL (104 aa). The span at 51 to 63 shows a compositional bias: polar residues; it reads LNKSQNQPYTQYN. The span at 64–75 shows a compositional bias: gly residues; the sequence is NGGGGGGGGGGH. 2 stretches are compositionally biased toward low complexity: residues 80-90 and 98-115; these read HLNLNSITNNH and PNTLSTPHNNNHNNNNHS. Transmembrane regions (helical) follow at residues 220–240, 244–264, 276–296, 304–324, 325–345, and 353–373; these read QIMLLRITNLIGIVAVSYGFT, IFMLIAIRILCFNLFAFSIFL, LFHPLFLFSFTTFFITILLEY, ILFLYVVIFCCLYALGCLLFI, WMVMCNLMNAICFIIFIFLES, and ISFVIYILTMFLVGASHLYVL. The Cytoplasmic segment spans residues 374–962; the sequence is EKFRKESFIA…KYVIINNVVE (589 aa). The Guanylate cyclase 1 domain occupies 438–661; that stretch reads SILCFDIVQF…DTIARSHTLE (224 aa). Residues D443, I444, and D488 each contribute to the Mg(2+) site. Disordered stretches follow at residues 502–590, 751–799, and 828–876; these read AKKQ…EEIE, KSNN…VLGE, and NDIV…EEDF. Low complexity-rich tracts occupy residues 505 to 526, 535 to 581, and 752 to 795; these read QMPNSKSTPLLQSTSSTSVNNI, NNNN…NNSG, and SNNN…SSSS. Positions 828–846 are enriched in polar residues; sequence NDIVSPSLTSNSPILDTTV. A compositionally biased stretch (low complexity) spans 847–871; that stretch reads NNNNNNNNTNNNNKNQNNIYGNNNN. 5 helical membrane-spanning segments follow: residues 963–979, 992–1012, 1018–1038, 1071–1091, and 1105–1125; these read TKFFLVIGLILHLMFYL, SNVIYLVMGIAFLVYIGLSFT, PLVYQIAFFILLCAFGVCTVL, LSVLFLNLFIFSFFIICSILI, and IGFVIVLLIQICSSYGMKLAM. Residues 1189 to 1311 enclose the Guanylate cyclase 2 domain; the sequence is SIMFIQIAGF…DTANTASRMQ (123 aa). A helical membrane pass occupies residues 1378-1398; that stretch reads ATPAGIASPLSGTLLGEIGSF. Over 1399–1407 the chain is Cytoplasmic; the sequence is TTPRFHLSS.

Belongs to the adenylyl cyclase class-4/guanylyl cyclase family. Mg(2+) is required as a cofactor. As to expression, expressed throughout the structure in the tipped mound and finger. Expressed primarily in the prestalk region of the slug. In the early culminant expression is increased in the posterior prespore and anterior-most regions and expands into the developing stalk. In the mid and late culminant it is expressed throughout the stalk.

It localises to the membrane. It is found in the cell projection. The protein resides in the uropodium. It carries out the reaction ATP = 3',5'-cyclic AMP + diphosphate. Regulated by cyclic AMP receptor 1 through a guanine nucleotide binding protein and protein CRAC. Both positively and negatively regulated by extracellular cAMP; this regulation is part of the mechanism that establishes the oscillatory cAMP waves during aggregation. Functionally, coordinates cell aggregation by synthesizing the cAMP that influences differentiation and morphogenesis of cells within a developing multicellular structure. The sequence is that of Adenylate cyclase, aggregation specific (acaA) from Dictyostelium discoideum (Social amoeba).